The primary structure comprises 341 residues: Myb-related transcription factor, partner of profilin (341 aa).

One can recognise a Myb-like domain in the interval 8–80 (VTRLRKPRFS…EVQKRWNDFK (73 aa)). Disordered regions lie at residues 84-103 (KEKLARVPHSTQSGTAEEAM), 180-210 (LPHLTPSPDPSECPSPPPPGSGTPLLTPSGV), and 309-341 (AEPPRSPSPPPPNKRKRFGYLSQRKRRGRWKNL). Over residues 184–200 (TPSPDPSECPSPPPPGS) the composition is skewed to pro residues. Basic residues predominate over residues 321–341 (NKRKRFGYLSQRKRRGRWKNL).

The protein resides in the nucleus. Functionally, transcriptional repressor; DNA-binding protein that specifically recognizes the core sequence 5'-YAAC[GT]G-3'. This chain is Myb-related transcription factor, partner of profilin (mypop), found in Xenopus laevis (African clawed frog).